The chain runs to 539 residues: GMP synthase [glutamine-hydrolyzing] (539 aa).

Positions 4 to 203 (KILILDFGSQ…VHDICGCKSD (200 aa)) constitute a Glutamine amidotransferase type-1 domain. Residue cysteine 82 is the Nucleophile of the active site. Catalysis depends on residues histidine 177 and glutamate 179. In terms of domain architecture, GMPS ATP-PPase spans 204–395 (WNMPDYIAEA…LGLPHDMVYR (192 aa)). Residue 231 to 237 (SGGVDSS) participates in ATP binding.

As to quaternary structure, homodimer.

It catalyses the reaction XMP + L-glutamine + ATP + H2O = GMP + L-glutamate + AMP + diphosphate + 2 H(+). It functions in the pathway purine metabolism; GMP biosynthesis; GMP from XMP (L-Gln route): step 1/1. Catalyzes the synthesis of GMP from XMP. In Janthinobacterium sp. (strain Marseille) (Minibacterium massiliensis), this protein is GMP synthase [glutamine-hydrolyzing].